Consider the following 552-residue polypeptide: Hydroxylamine reductase (552 aa).

The [2Fe-2S] cluster site is built by C5, C8, C20, and C27. Hybrid [4Fe-2O-2S] cluster contacts are provided by H251, E275, C319, C407, C435, C460, E494, and K496. The residue at position 407 (C407) is a Cysteine persulfide.

It belongs to the HCP family. It depends on [2Fe-2S] cluster as a cofactor. Requires hybrid [4Fe-2O-2S] cluster as cofactor.

It localises to the cytoplasm. It catalyses the reaction A + NH4(+) + H2O = hydroxylamine + AH2 + H(+). Catalyzes the reduction of hydroxylamine to form NH(3) and H(2)O. This chain is Hydroxylamine reductase, found in Escherichia coli (strain UTI89 / UPEC).